The chain runs to 103 residues: Conantokin-Br (103 aa).

Positions 1 to 21 (MQLYTYLYLLVPLVTFHLILG) are cleaved as a signal peptide. A propeptide spanning residues 22-79 (TGTLDHGGALTERRSTDATALKPEPVLQKSAARSTDDNGKDRLTQMKRILKKRGKNAR) is cleaved from the precursor. Positions 34 to 64 (RRSTDATALKPEPVLQKSAARSTDDNGKDRL) are disordered. A compositionally biased stretch (basic and acidic residues) spans 55–64 (STDDNGKDRL). 4 positions are modified to 4-carboxyglutamate: E82, E83, E89, and E93. The a divalent metal cation site is built by E89 and E93.

The protein belongs to the conotoxin B superfamily. Ca(2+) is required as a cofactor. It depends on Mg(2+) as a cofactor. In terms of tissue distribution, expressed by the venom duct.

The protein localises to the secreted. Functionally, conantokins inhibit N-methyl-D-aspartate (NMDA) receptors. This toxin inhibits NR2 subunits N-methyl-D-aspartate (NMDA) receptor-mediated calcium influx in central nervous system neurons in the following order of preference: NR2B/GRIN2B (IC(50)=0.14 uM), NR2D/GRIN2D (IC(50)=0.31 uM), NR2A/GRIN2A (IC(50)=0.68 uM) and NR2C/GRIN2A (IC(50)=4.9 uM), when tested on rat receptors. This Conus sulcatus (Sulcate cone) protein is Conantokin-Br.